A 482-amino-acid polypeptide reads, in one-letter code: ATP synthase subunit beta, chloroplastic (482 aa).

168 to 175 is an ATP binding site; it reads GGAGVGKT.

This sequence belongs to the ATPase alpha/beta chains family. As to quaternary structure, F-type ATPases have 2 components, CF(1) - the catalytic core - and CF(0) - the membrane proton channel. CF(1) has five subunits: alpha(3), beta(3), gamma(1), delta(1), epsilon(1). CF(0) has four main subunits: a(1), b(1), b'(1) and c(9-12).

It is found in the plastid. It localises to the chloroplast thylakoid membrane. The catalysed reaction is ATP + H2O + 4 H(+)(in) = ADP + phosphate + 5 H(+)(out). Functionally, produces ATP from ADP in the presence of a proton gradient across the membrane. The catalytic sites are hosted primarily by the beta subunits. This is ATP synthase subunit beta, chloroplastic from Gnetum parvifolium (Small-leaved jointfir).